The primary structure comprises 466 residues: L-seryl-tRNA(Sec) selenium transferase (466 aa).

K293 bears the N6-(pyridoxal phosphate)lysine mark.

It belongs to the SelA family. Pyridoxal 5'-phosphate serves as cofactor.

Its subcellular location is the cytoplasm. The enzyme catalyses L-seryl-tRNA(Sec) + selenophosphate + H(+) = L-selenocysteinyl-tRNA(Sec) + phosphate. The protein operates within aminoacyl-tRNA biosynthesis; selenocysteinyl-tRNA(Sec) biosynthesis; selenocysteinyl-tRNA(Sec) from L-seryl-tRNA(Sec) (bacterial route): step 1/1. In terms of biological role, converts seryl-tRNA(Sec) to selenocysteinyl-tRNA(Sec) required for selenoprotein biosynthesis. In Desulfotalea psychrophila (strain LSv54 / DSM 12343), this protein is L-seryl-tRNA(Sec) selenium transferase.